The following is a 431-amino-acid chain: Adenylosuccinate synthetase (431 aa).

GTP-binding positions include 13–19 (GDEGKGK) and 41–43 (GHT). The active-site Proton acceptor is the Asp14. Asp14 and Gly41 together coordinate Mg(2+). Residues 14–17 (DEGK), 39–42 (NAGH), Thr130, Arg144, Gln225, Thr240, and Arg304 each bind IMP. His42 functions as the Proton donor in the catalytic mechanism. 300–306 (ATTGRKR) lines the substrate pocket. GTP is bound by residues Arg306, 332–334 (KLD), and 415–417 (STG).

This sequence belongs to the adenylosuccinate synthetase family. As to quaternary structure, homodimer. Mg(2+) serves as cofactor.

The protein localises to the cytoplasm. The enzyme catalyses IMP + L-aspartate + GTP = N(6)-(1,2-dicarboxyethyl)-AMP + GDP + phosphate + 2 H(+). Its pathway is purine metabolism; AMP biosynthesis via de novo pathway; AMP from IMP: step 1/2. In terms of biological role, plays an important role in the de novo pathway of purine nucleotide biosynthesis. Catalyzes the first committed step in the biosynthesis of AMP from IMP. In Shewanella piezotolerans (strain WP3 / JCM 13877), this protein is Adenylosuccinate synthetase.